Reading from the N-terminus, the 449-residue chain is Ribulose bisphosphate carboxylase large chain (449 aa).

N6,N6,N6-trimethyllysine is present on K7. Positions 116 and 166 each coordinate substrate. The Proton acceptor role is filled by K168. Position 170 (K170) interacts with substrate. 3 residues coordinate Mg(2+): K194, D196, and E197. An N6-carboxylysine modification is found at K194. The active-site Proton acceptor is H287. Positions 288, 320, and 372 each coordinate substrate.

It belongs to the RuBisCO large chain family. Type I subfamily. In terms of assembly, heterohexadecamer of 8 large chains and 8 small chains; disulfide-linked. The disulfide link is formed within the large subunit homodimers. Mg(2+) is required as a cofactor. The disulfide bond which can form in the large chain dimeric partners within the hexadecamer appears to be associated with oxidative stress and protein turnover.

It localises to the plastid. Its subcellular location is the chloroplast. It catalyses the reaction 2 (2R)-3-phosphoglycerate + 2 H(+) = D-ribulose 1,5-bisphosphate + CO2 + H2O. The catalysed reaction is D-ribulose 1,5-bisphosphate + O2 = 2-phosphoglycolate + (2R)-3-phosphoglycerate + 2 H(+). Its function is as follows. RuBisCO catalyzes two reactions: the carboxylation of D-ribulose 1,5-bisphosphate, the primary event in carbon dioxide fixation, as well as the oxidative fragmentation of the pentose substrate in the photorespiration process. Both reactions occur simultaneously and in competition at the same active site. The sequence is that of Ribulose bisphosphate carboxylase large chain from Liriope muscari (Big blue lilyturf).